The primary structure comprises 299 residues: Leucine zipper transcription factor-like protein 1 (299 aa).

A coiled-coil region spans residues 96–296 (LKLQTDISEL…DLRKRLAQYE (201 aa)). The interaction with BSS9 stretch occupies residues 145–299 (GTAELLNKEI…KRLAQYEPED (155 aa)).

The protein belongs to the LZTFL1 family. In terms of assembly, self-associates. Interacts with BBS9; the interaction mediates the association of LZTL1 with the BBsome complex and regulates BBSome ciliary trafficking. As to expression, expressed in prostate, ovary, stomach, pancreas, esophagus, breast, liver, bladder, kidney, thyroid, colon and lung (at protein level). Down-regulated in multiple primary tumors (at protein level). Detected in testis, heart, skeletal muscle, thymus, spleen, small intestine, and peripheral blood leukocytes.

It localises to the cytoplasm. Its function is as follows. Regulates ciliary localization of the BBSome complex. Together with the BBSome complex, controls SMO ciliary trafficking and contributes to the sonic hedgehog (SHH) pathway regulation. May play a role in neurite outgrowth. May have tumor suppressor function. The polypeptide is Leucine zipper transcription factor-like protein 1 (LZTFL1) (Homo sapiens (Human)).